The following is a 156-amino-acid chain: Small ribosomal subunit protein uS7 (156 aa).

Belongs to the universal ribosomal protein uS7 family. In terms of assembly, part of the 30S ribosomal subunit. Contacts proteins S9 and S11.

In terms of biological role, one of the primary rRNA binding proteins, it binds directly to 16S rRNA where it nucleates assembly of the head domain of the 30S subunit. Is located at the subunit interface close to the decoding center, probably blocks exit of the E-site tRNA. The chain is Small ribosomal subunit protein uS7 from Rhodospirillum centenum (strain ATCC 51521 / SW).